A 362-amino-acid polypeptide reads, in one-letter code: Heat-inducible transcription repressor HrcA (362 aa).

It belongs to the HrcA family.

Negative regulator of class I heat shock genes (grpE-dnaK-dnaJ and groELS operons). Prevents heat-shock induction of these operons. This Rhizobium rhizogenes (strain K84 / ATCC BAA-868) (Agrobacterium radiobacter) protein is Heat-inducible transcription repressor HrcA.